Here is a 353-residue protein sequence, read N- to C-terminus: MSEPLKPRIDFAEPLKEEPTSAFKAQQTFSEAESRTFAPAAIDERPEDEGVAEAAVDAALRPKRSLWRKMVMGGLALFGASVVGQGVQWTMNAWQTQDWVALGGCAAGALIIGAGVGSVVTEWRRLWRLRQRAHERDEARELLHSHSVGKGRAFCEKLAQQAGIDQSHPALQRWYAAIHETQNDREIVGLYAHLVQPVLDAQARREISRFAAESTLMIAVSPLALVDMAFIAWRNLRLINRIATLYGIELGYYSRLRLFRLVLLNIAFAGASELVREVGMDWMSQDLAARLSTRAAQGIGAGLLTARLGIKAMELCRPLPWIDNDKPRLGDFRRQLIGQLKETLQKSKSSPEK.

The segment covering 1 to 19 (MSEPLKPRIDFAEPLKEEP) has biased composition (basic and acidic residues). Residues 1-35 (MSEPLKPRIDFAEPLKEEPTSAFKAQQTFSEAESR) are disordered. 3 consecutive transmembrane segments (helical) span residues 70–90 (MVMG…VQWT), 100–120 (VALG…GSVV), and 213–233 (ESTL…FIAW).

This sequence belongs to the UPF0283 family.

Its subcellular location is the cell inner membrane. The chain is UPF0283 membrane protein YcjF from Salmonella paratyphi C (strain RKS4594).